Consider the following 204-residue polypeptide: Apoptosis regulator R11 (204 aa).

Positions 101–120 (ELFRDGTNWGRIVAFFSFGR) match the BH1 motif. Residues 152–167 (PWMQENGGWEAFVGLY) carry the BH2 motif. Residues 181 to 198 (RFGRLLTIVMLTGVFALV) form a helical membrane-spanning segment.

This sequence belongs to the Bcl-2 family.

The protein localises to the membrane. In terms of biological role, confers strong protection against cell death. The protein is Apoptosis regulator R11 of Xenopus laevis (African clawed frog).